We begin with the raw amino-acid sequence, 461 residues long: A-type ATP synthase subunit B (461 aa).

Belongs to the ATPase alpha/beta chains family. Has multiple subunits with at least A(3), B(3), C, D, E, F, H, I and proteolipid K(x).

The protein localises to the cell membrane. Its function is as follows. Component of the A-type ATP synthase that produces ATP from ADP in the presence of a proton gradient across the membrane. The B chain is a regulatory subunit. In Nitrosopumilus maritimus (strain SCM1), this protein is A-type ATP synthase subunit B.